Reading from the N-terminus, the 354-residue chain is UDP-galactose transporter homolog 1 (354 aa).

Transmembrane regions (helical) follow at residues 6 to 26 (GGSI…FLTW), 54 to 74 (LVIN…YSVV), 95 to 112 (FFKS…SSPL), 123 to 143 (LAYL…HFVL), and 148 to 168 (FPLY…IFTL). Asparagine 202 carries an N-linked (GlcNAc...) asparagine glycan. The next 4 helical transmembrane spans lie at 227–247 (YLMC…ALIF), 268–288 (MNIL…FIIL), 295–317 (ILIT…LFGH), and 321–340 (GLQW…EALV).

It belongs to the nucleotide-sugar transporter family. SLC35B subfamily.

The protein localises to the endoplasmic reticulum membrane. May be involved in specific transport of UDP-Gal from the cytosol to the Golgi lumen. Involved in the maintenance of optimal conditions for the folding of secretory pathway proteins in the endoplasmic reticulum. The sequence is that of UDP-galactose transporter homolog 1 (HUT1) from Debaryomyces hansenii (strain ATCC 36239 / CBS 767 / BCRC 21394 / JCM 1990 / NBRC 0083 / IGC 2968) (Yeast).